We begin with the raw amino-acid sequence, 69 residues long: UPF0434 protein Rmet_0534 (69 aa).

This sequence belongs to the UPF0434 family.

This chain is UPF0434 protein Rmet_0534, found in Cupriavidus metallidurans (strain ATCC 43123 / DSM 2839 / NBRC 102507 / CH34) (Ralstonia metallidurans).